Here is an 86-residue protein sequence, read N- to C-terminus: CLAVATA3/ESR (CLE)-related protein 8 (86 aa).

A signal peptide spans 1-24; the sequence is MKVLKRDSMLLLITLYFLLTTSMA. A disordered region spans residues 43–86; the sequence is DLKQNKAKPHLPNLFRTMRRVPTGPNPLHHISPPQPGSLNYARN. A hydroxyproline mark is found at P64 and P67. O-linked (Ara...) hydroxyproline glycosylation occurs at P67.

This sequence belongs to the CLV3/ESR signal peptide family. Post-translationally, the O-glycosylation (arabinosylation) of the hydroxyproline Pro-67 enhances binding affinity of the CLE8p peptide for its receptor. Mostly expressed in siliques, and, to a lower extent, in flowers. Expressed in young embryos and endosperm.

The protein localises to the secreted. Its subcellular location is the extracellular space. Its function is as follows. Extracellular signal peptide that regulates cell fate. Represses root apical meristem maintenance. Positively regulates the expression of the transcription factor WOX8 and thus, regulates early embryo development. Regulates the transition of protophloem cells from proliferation to differentiation, thus impinging on postembryonic growth capacity of the root meristem; this signaling pathway requires CRN and CLV2. This is CLAVATA3/ESR (CLE)-related protein 8 from Arabidopsis thaliana (Mouse-ear cress).